Here is a 326-residue protein sequence, read N- to C-terminus: MDLTAIYESLLSLSPDVPVPSDHGGTESSPGWGSSGPWSLSPSDSSPSGVTSRLPGRSTSLVEGRSCGWVPPPPGFAPLAPRLGPELSPSPTSPTATSTTPSRYKTELCRTFSESGRCRYGAKCQFAHGLGELRQANRHPKYKTELCHKFYLQGRCPYGSRCHFIHNPSEDLAAPGHPPVLRQSISFSGLPSGRRTSPPPPGLAGPSLSSSSFSPSSSPPPPGDLPLSPSAFSAAPGTPLARRDPTPVCCPSCRRATPISVWGPLGGLVRTPSVQSLGSDPDEYASSGSSLGGSDSPVFEAGVFAPPQPVAAPRRLPIFNRISVSE.

Residues 1–15 (MDLTAIYESLLSLSP) form a necessary for nuclear export region. A necessary and sufficient for the association with mRNA decay enzymes and mRNA decay activation region spans residues 1-100 (MDLTAIYESL…PTSPTATSTT (100 aa)). Necessary for localization of ARE-containing mRNAs to processing bodies (PBs) regions lie at residues 1–174 (MDLT…DLAA) and 100–326 (TPSR…SVSE). The disordered stretch occupies residues 13 to 66 (LSPDVPVPSDHGGTESSPGWGSSGPWSLSPSDSSPSGVTSRLPGRSTSLVEGRS). Residues 28–49 (SSPGWGSSGPWSLSPSDSSPSG) are compositionally biased toward low complexity. At Ser-60 the chain carries Phosphoserine; by MAPKAPK2. Phosphoserine is present on Ser-66. The stretch at 71 to 75 (PPPPG) is one P-P-P-P-G repeat. Residues 78-102 (PLAPRLGPELSPSPTSPTATSTTPS) form a disordered region. A phosphoserine mark is found at Ser-88 and Ser-90. Thr-92 bears the Phosphothreonine mark. A Phosphoserine modification is found at Ser-93. Positions 95–168 (TATSTTPSRY…GSRCHFIHNP (74 aa)) are necessary for nuclear localization. The interval 97–173 (TSTTPSRYKT…FIHNPSEDLA (77 aa)) is necessary for RNA-binding. 2 consecutive C3H1-type zinc fingers follow at residues 103 to 131 (RYKT…HGLG) and 141 to 169 (KYKT…HNPS). The segment at 103–194 (RYKTELCRTF…ISFSGLPSGR (92 aa)) is necessary for interaction with PABPN1. Ser-169 carries the phosphoserine modification. A necessary for mRNA decay activation region spans residues 174–326 (APGHPPVLRQ…PIFNRISVSE (153 aa)). Disordered regions lie at residues 175 to 245 (PGHP…RRDP) and 273 to 292 (SVQS…SSLG). The residue at position 186 (Ser-186) is a Phosphoserine; by MAPKAPK2. The residue at position 197 (Ser-197) is a Phosphoserine. Residues 198 to 202 (PPPPG) form a P-P-P-P-G repeat. Residues 204–216 (AGPSLSSSSFSPS) are compositionally biased toward low complexity. Ser-218 carries the phosphoserine modification. A P-P-P-P-G repeat occupies 219-223 (PPPPG). A Phosphoserine; by MAPK1; in vitro modification is found at Ser-228. Phosphoserine is present on residues Ser-276, Ser-296, and Ser-323. The interval 312–326 (APRRLPIFNRISVSE) is interaction with CNOT1.

In terms of assembly, associates with cytoplasmic CCR4-NOT and PAN2-PAN3 deadenylase complexes to trigger ARE-containing mRNA deadenylation and decay processes. Part of a mRNA decay activation complex at least composed of poly(A)-specific exoribonucleases CNOT6, EXOSC2 and XRN1 and mRNA-decapping enzymes DCP1A and DCP2. Associates with the RNA exosome complex. Interacts (via phosphorylated form) with 14-3-3 proteins; these interactions promote exclusion of ZFP36 from cytoplasmic stress granules in response to arsenite treatment in a MAPKAPK2-dependent manner and does not prevent CCR4-NOT deadenylase complex recruitment or ZFP36-induced ARE-containing mRNA deadenylation and decay processes. Interacts with 14-3-3 proteins; these interactions occur in response to rapamycin in an Akt-dependent manner. Interacts with AGO2 and AGO4. Interacts (via C-terminus) with CNOT1; this interaction occurs in a RNA-independent manner and induces mRNA deadenylation. Interacts (via N-terminus) with CNOT6. Interacts with CNOT6L. Interacts (via C-terminus) with CNOT7; this interaction occurs in a RNA-independent manner, induces mRNA deadenylation and is inhibited in a phosphorylation MAPKAPK2-dependent manner. Interacts (via unphosphorylated form) with CNOT8; this interaction occurs in a RNA-independent manner and is inhibited in a phosphorylation MAPKAPK2-dependent manner. Interacts with DCP1A. Interacts (via N-terminus) with DCP2. Interacts with EDC3. Interacts (via N-terminus) with EXOSC2. Interacts with heat shock 70 kDa proteins. Interacts with KHSRP; this interaction increases upon cytokine-induced treatment. Interacts with MAP3K4; this interaction enhances the association with SH3KBP1/CIN85. Interacts with MAPKAPK2; this interaction occurs upon skeletal muscle satellite cell activation. Interacts with NCL. Interacts with NUP214; this interaction increases upon lipopolysaccharide (LPS) stimulation. Interacts with PABPC1; this interaction occurs in a RNA-dependent manner. Interacts (via hypophosphorylated form) with PABPN1 (via RRM domain and C-terminal arginine-rich region); this interaction occurs in the nucleus in a RNA-independent manner, decreases in presence of single-stranded poly(A) RNA-oligomer and in a p38 MAPK-dependent-manner and inhibits nuclear poly(A) tail synthesis. Interacts with PAN2. Interacts (via C3H1-type zinc finger domains) with PKM. Interacts (via C3H1-type zinc finger domains) with nuclear RNA poly(A) polymerase. Interacts with PPP2CA; this interaction occurs in LPS-stimulated cells and induces ZFP36 dephosphorylation, and hence may promote ARE-containing mRNAs decay. Interacts (via C-terminus) with PRR5L (via C-terminus); this interaction may accelerate ZFP36-mediated mRNA decay during stress. Interacts (via C-terminus) with SFN; this interaction occurs in a phosphorylation-dependent manner. Interacts (via extreme C-terminal region) with SH3KBP1/CIN85 (via SH3 domains); this interaction enhances MAP3K4-induced phosphorylation of ZFP36 at Ser-66 and Ser-93 and does not alter neither ZFP36 binding to ARE-containing transcripts nor TNF-alpha mRNA decay. Interacts with XRN1. Interacts (via C-terminus and Ser-186 phosphorylated form) with YWHAB; this interaction occurs in a p38/MAPKAPK2-dependent manner, increases cytoplasmic localization of ZFP36 and protects ZFP36 from Ser-186 dephosphorylation by serine/threonine phosphatase 2A, and hence may be crucial for stabilizing ARE-containing mRNAs. Interacts (via phosphorylated form) with YWHAE. Interacts (via C-terminus) with YWHAG; this interaction occurs in a phosphorylation-dependent manner. Interacts with YWHAH; this interaction occurs in a phosphorylation-dependent manner. Interacts with YWHAQ; this interaction occurs in a phosphorylation-dependent manner. Interacts with (via C-terminus) YWHAZ; this interaction occurs in a phosphorylation-dependent manner. Interacts (via P-P-P-P-G repeats) with GIGYF2; the interaction is direct. As to quaternary structure, (Microbial infection) Interacts (via C-terminus) with HTLV-1 TAX (via C-terminus); this interaction inhibits HTLV-1 TAX to transactivate viral long terminal repeat (LTR) promoter. Post-translationally, phosphorylated. Phosphorylation at serine and/or threonine residues occurs in a p38 MAPK- and MAPKAPK2-dependent manner. Phosphorylated by MAPKAPK2 at Ser-60 and Ser-186; phosphorylation increases its stability and cytoplasmic localization, promotes binding to 14-3-3 adapter proteins and inhibits the recruitment of cytoplasmic CCR4-NOT and PAN2-PAN3 deadenylase complexes to the mRNA decay machinery, thereby inhibiting ZFP36-induced ARE-containing mRNA deadenylation and decay processes. Phosphorylation by MAPKAPK2 does not impair ARE-containing RNA-binding. Phosphorylated in a MAPKAPK2- and p38 MAPK-dependent manner upon skeletal muscle satellite cell activation; this phosphorylation inhibits ZFP36-mediated mRNA decay activity, and hence stabilizes MYOD1 mRNA. Phosphorylated by MAPK1 upon mitogen stimulation. Phosphorylated at Ser-66 and Ser-93; these phosphorylations increase in a SH3KBP1-dependent manner. Phosphorylated at serine and threonine residues in a pyruvate kinase PKM- and p38 MAPK-dependent manner. Phosphorylation at Ser-60 may participate in the PKM-mediated degradation of ZFP36 in a p38 MAPK-dependent manner. Dephosphorylated by serine/threonine phosphatase 2A at Ser-186. Ubiquitinated; pyruvate kinase (PKM)-dependent ubiquitination leads to proteasomal degradation through a p38 MAPK signaling pathway. Expressed in both basal and suprabasal epidermal layers. Expressed in epidermal keratinocytes. Expressed strongly in mature dendritic cells. Expressed in immature dendritic cells (at protein level).

It is found in the nucleus. The protein localises to the cytoplasm. The protein resides in the cytoplasmic granule. Its subcellular location is the P-body. Zinc-finger RNA-binding protein that destabilizes several cytoplasmic AU-rich element (ARE)-containing mRNA transcripts by promoting their poly(A) tail removal or deadenylation, and hence provide a mechanism for attenuating protein synthesis. Acts as an 3'-untranslated region (UTR) ARE mRNA-binding adapter protein to communicate signaling events to the mRNA decay machinery. Recruits deadenylase CNOT7 (and probably the CCR4-NOT complex) via association with CNOT1, and hence promotes ARE-mediated mRNA deadenylation. Functions also by recruiting components of the cytoplasmic RNA decay machinery to the bound ARE-containing mRNAs. Self regulates by destabilizing its own mRNA. Binds to 3'-UTR ARE of numerous mRNAs and of its own mRNA. Plays a role in anti-inflammatory responses; suppresses tumor necrosis factor (TNF)-alpha production by stimulating ARE-mediated TNF-alpha mRNA decay and several other inflammatory ARE-containing mRNAs in interferon (IFN)- and/or lipopolysaccharide (LPS)-induced macrophages. Also plays a role in the regulation of dendritic cell maturation at the post-transcriptional level, and hence operates as part of a negative feedback loop to limit the inflammatory response. Promotes ARE-mediated mRNA decay of hypoxia-inducible factor HIF1A mRNA during the response of endothelial cells to hypoxia. Positively regulates early adipogenesis of preadipocytes by promoting ARE-mediated mRNA decay of immediate early genes (IEGs). Negatively regulates hematopoietic/erythroid cell differentiation by promoting ARE-mediated mRNA decay of the transcription factor STAT5B mRNA. Plays a role in maintaining skeletal muscle satellite cell quiescence by promoting ARE-mediated mRNA decay of the myogenic determination factor MYOD1 mRNA. Associates also with and regulates the expression of non-ARE-containing target mRNAs at the post-transcriptional level, such as MHC class I mRNAs. Participates in association with argonaute RISC catalytic components in the ARE-mediated mRNA decay mechanism; assists microRNA (miRNA) targeting ARE-containing mRNAs. May also play a role in the regulation of cytoplasmic mRNA decapping; enhances decapping of ARE-containing RNAs, in vitro. Involved in the delivery of target ARE-mRNAs to processing bodies (PBs). In addition to its cytosolic mRNA-decay function, affects nuclear pre-mRNA processing. Negatively regulates nuclear poly(A)-binding protein PABPN1-stimulated polyadenylation activity on ARE-containing pre-mRNA during LPS-stimulated macrophages. Also involved in the regulation of stress granule (SG) and P-body (PB) formation and fusion. Plays a role in the regulation of keratinocyte proliferation, differentiation and apoptosis. Plays a role as a tumor suppressor by inhibiting cell proliferation in breast cancer cells. Its function is as follows. (Microbial infection) Negatively regulates HTLV-1 TAX-dependent transactivation of viral long terminal repeat (LTR) promoter. In Homo sapiens (Human), this protein is mRNA decay activator protein ZFP36.